The following is a 146-amino-acid chain: Peptide methionine sulfoxide reductase MsrB (146 aa).

The MsrB domain occupies 2 to 125; that stretch reads LKKNKDELND…NSAAVQFIPY (124 aa). Cysteine 114 acts as the Nucleophile in catalysis.

This sequence belongs to the MsrB Met sulfoxide reductase family.

It carries out the reaction L-methionyl-[protein] + [thioredoxin]-disulfide + H2O = L-methionyl-(R)-S-oxide-[protein] + [thioredoxin]-dithiol. The sequence is that of Peptide methionine sulfoxide reductase MsrB from Staphylococcus carnosus (strain TM300).